Here is a 263-residue protein sequence, read N- to C-terminus: Small ribosomal subunit protein uS2 (263 aa).

N-acetylserine is present on serine 2. A compositionally biased stretch (low complexity) spans 213 to 223 (NAAEEARAGAT). Positions 213–245 (NAAEEARAGATEETEEVVAEAETEWNTETNVED) are disordered. Residues 224–245 (EETEEVVAEAETEWNTETNVED) are compositionally biased toward acidic residues.

It belongs to the universal ribosomal protein uS2 family. Component of the small ribosomal subunit. Mature ribosomes consist of a small (40S) and a large (60S) subunit. The 40S subunit contains about 33 different proteins and 1 molecule of RNA (18S). The 60S subunit contains about 49 different proteins and 3 molecules of RNA (25S, 5.8S and 5S). Interacts with RPS21.

It localises to the cytoplasm. In terms of biological role, required for the assembly and/or stability of the 40S ribosomal subunit. Required for the processing of the 20S rRNA-precursor to mature 18S rRNA in a late step of the maturation of 40S ribosomal subunits. The chain is Small ribosomal subunit protein uS2 from Clavispora lusitaniae (strain ATCC 42720) (Yeast).